The sequence spans 140 residues: Interleukin-4 (140 aa).

Residues 1-20 (MGLNPQLVVILLFFLECTRS) form the signal peptide. Disulfide bonds link Cys25–Cys107, Cys47–Cys87, and Cys69–Cys114. Residues Asn61, Asn91, and Asn117 are each glycosylated (N-linked (GlcNAc...) asparagine).

Belongs to the IL-4/IL-13 family. Interacts with IL4R. Interacts with IL13RA1.

The protein resides in the secreted. Cytokine secreted primarily by mast cells, T-cells, eosinophils, and basophils that plays a role in regulating antibody production, hematopoiesis and inflammation, and the development of effector T-cell responses. Induces the expression of class II MHC molecules on resting B-cells. Enhances both secretion and cell surface expression of IgE and IgG1. Also regulates the expression of the low affinity Fc receptor for IgE (CD23) on both lymphocytes and monocytes. Positively regulates IL31RA expression in macrophages. Stimulates autophagy in dendritic cells by interfering with mTORC1 signaling and through the induction of RUFY4. In addition, plays a critical role in higher functions of the normal brain, such as memory and learning. Upon binding to IL4, IL4R receptor dimerizes either with the common IL2R gamma chain/IL2RG to produce the type 1 signaling complex, located mainly on hematopoietic cells, or with the IL13RA1 to produce the type 2 complex, which is also expressed on nonhematopoietic cells. Engagement of both types of receptors initiates JAK3 and to a lower extend JAK1 phosphorylation leading to activation of the signal transducer and activator of transcription 6/STAT6. The chain is Interleukin-4 (Il4) from Mus musculus (Mouse).